Here is a 1187-residue protein sequence, read N- to C-terminus: ATP-dependent DNA helicase MER3 (1187 aa).

The interval 1–41 (MKTKFDRLGTGKRSRPSPNNIDFNDQSATFKRNKKNSRQPS) is disordered. Over residues 16 to 30 (PSPNNIDFNDQSATF) the composition is skewed to polar residues. Residues 148 to 322 (PSIYESNENC…WLKTNNELPA (175 aa)) form the Helicase ATP-binding domain. 161 to 168 (SPTGSGKT) is a binding site for ATP. The DEIH box motif lies at 268 to 271 (DEIH). Residues 360-542 (KLIEIIEKHA…NLIEHLAAET (183 aa)) enclose the Helicase C-terminal domain. Residues 616–922 (STAYGNAMTR…PKLEKIEFSI (307 aa)) enclose the SEC63 domain. The C4-type zinc finger occupies 1039-1054 (CFHSCKDKTQCRHLCC). A disordered region spans residues 1146–1187 (NCPEIIPIDLESSDSYSSNTAASSISDPNGDLDFLGSDIEFE). Positions 1158–1171 (SDSYSSNTAASSIS) are enriched in low complexity.

Belongs to the helicase family. SKI2 subfamily. As to quaternary structure, oligomerizes. The cofactor is a divalent metal cation. Zn(2+) serves as cofactor.

The protein localises to the nucleus. The enzyme catalyses Couples ATP hydrolysis with the unwinding of duplex DNA by translocating in the 3'-5' direction.. It catalyses the reaction ATP + H2O = ADP + phosphate + H(+). Functionally, DNA-dependent ATPase and 3'-5' DNA helicase. Required in the control of double strand break transition and crossover during meiosis. ATPase is slightly better stimulated by single-stranded (ss) than double-stranded (ds)DNA. Unwinds Holliday junction (HJ) DNA to Y-DNA and to ssDNA. Efficient unwinding requires 6 nucleotides of 3'-ssDNA; seems to initiate unwinding from blunt ends when they open slightly. Binds HJ, dsDNA, ssDNA and 3'- and 5-overhang DNA. This chain is ATP-dependent DNA helicase MER3, found in Saccharomyces cerevisiae (strain ATCC 204508 / S288c) (Baker's yeast).